A 440-amino-acid polypeptide reads, in one-letter code: Serine/threonine-protein kinase 2 (440 aa).

Residues 85 to 440 enclose the Protein kinase domain; it reads NDDFYHISTG…FSNWINGESC (356 aa). Residues 91 to 99 and Lys115 each bind ATP; that span reads ISTGGYGIV. The active-site Proton acceptor is Asp306.

This sequence belongs to the protein kinase superfamily. Ser/Thr protein kinase family. Poxviruses subfamily. Post-translationally, phosphorylated in vivo. Autophosphorylated in vitro.

The protein localises to the host endoplasmic reticulum. It is found in the host endoplasmic reticulum-Golgi intermediate compartment. It catalyses the reaction L-seryl-[protein] + ATP = O-phospho-L-seryl-[protein] + ADP + H(+). The catalysed reaction is L-threonyl-[protein] + ATP = O-phospho-L-threonyl-[protein] + ADP + H(+). Its function is as follows. Essential serine-protein kinase involved in the early stage of virion morphogenesis. This is Serine/threonine-protein kinase 2 (OPG054) from Sus scrofa (Pig).